The primary structure comprises 323 residues: Glucokinase (323 aa).

Residue 8–13 (GDVGGT) participates in ATP binding.

It belongs to the bacterial glucokinase family.

It localises to the cytoplasm. The catalysed reaction is D-glucose + ATP = D-glucose 6-phosphate + ADP + H(+). The chain is Glucokinase from Yersinia pseudotuberculosis serotype I (strain IP32953).